The primary structure comprises 252 residues: Phosphate import ATP-binding protein PstB (252 aa).

The 243-residue stretch at 5–247 folds into the ABC transporter domain; that stretch reads VKIDKLNVHF…PEKKQTEDYI (243 aa). 37–44 is a binding site for ATP; it reads GPSGCGKS.

This sequence belongs to the ABC transporter superfamily. Phosphate importer (TC 3.A.1.7) family. As to quaternary structure, the complex is composed of two ATP-binding proteins (PstB), two transmembrane proteins (PstC and PstA) and a solute-binding protein (PstS).

The protein resides in the cell inner membrane. It carries out the reaction phosphate(out) + ATP + H2O = ADP + 2 phosphate(in) + H(+). Its function is as follows. Part of the ABC transporter complex PstSACB involved in phosphate import. Responsible for energy coupling to the transport system. This is Phosphate import ATP-binding protein PstB from Geobacter metallireducens (strain ATCC 53774 / DSM 7210 / GS-15).